The sequence spans 194 residues: Imidazoleglycerol-phosphate dehydratase (194 aa).

This sequence belongs to the imidazoleglycerol-phosphate dehydratase family.

It localises to the cytoplasm. It carries out the reaction D-erythro-1-(imidazol-4-yl)glycerol 3-phosphate = 3-(imidazol-4-yl)-2-oxopropyl phosphate + H2O. It functions in the pathway amino-acid biosynthesis; L-histidine biosynthesis; L-histidine from 5-phospho-alpha-D-ribose 1-diphosphate: step 6/9. The chain is Imidazoleglycerol-phosphate dehydratase from Chlorobaculum tepidum (strain ATCC 49652 / DSM 12025 / NBRC 103806 / TLS) (Chlorobium tepidum).